Consider the following 101-residue polypeptide: ATP-dependent Clp protease adapter protein ClpS (101 aa).

The protein belongs to the ClpS family. Binds to the N-terminal domain of the chaperone ClpA.

Functionally, involved in the modulation of the specificity of the ClpAP-mediated ATP-dependent protein degradation. In Treponema denticola (strain ATCC 35405 / DSM 14222 / CIP 103919 / JCM 8153 / KCTC 15104), this protein is ATP-dependent Clp protease adapter protein ClpS.